The following is a 130-amino-acid chain: Fluoride-specific ion channel FluC (130 aa).

Transmembrane regions (helical) follow at residues 10-30 (FAVA…SLWF), 41-61 (GTLI…TVAM), 72-89 (LLFG…STYE), and 105-125 (LVYW…GILL). Residues G80 and T83 each contribute to the Na(+) site.

Belongs to the fluoride channel Fluc/FEX (TC 1.A.43) family.

Its subcellular location is the cell inner membrane. The catalysed reaction is fluoride(in) = fluoride(out). With respect to regulation, na(+) is not transported, but it plays an essential structural role and its presence is essential for fluoride channel function. In terms of biological role, fluoride-specific ion channel. Important for reducing fluoride concentration in the cell, thus reducing its toxicity. The sequence is that of Fluoride-specific ion channel FluC from Synechococcus sp. (strain JA-2-3B'a(2-13)) (Cyanobacteria bacterium Yellowstone B-Prime).